Consider the following 158-residue polypeptide: 6,7-dimethyl-8-ribityllumazine synthase (158 aa).

Residues Phe-22, 57 to 59 (AVE), and 81 to 83 (AVI) each bind 5-amino-6-(D-ribitylamino)uracil. A (2S)-2-hydroxy-3-oxobutyl phosphate-binding site is contributed by 86–87 (GT). The active-site Proton donor is the His-89. Phe-114 is a 5-amino-6-(D-ribitylamino)uracil binding site. Position 128 (Arg-128) interacts with (2S)-2-hydroxy-3-oxobutyl phosphate.

Belongs to the DMRL synthase family. In terms of assembly, forms an icosahedral capsid composed of 60 subunits, arranged as a dodecamer of pentamers.

The catalysed reaction is (2S)-2-hydroxy-3-oxobutyl phosphate + 5-amino-6-(D-ribitylamino)uracil = 6,7-dimethyl-8-(1-D-ribityl)lumazine + phosphate + 2 H2O + H(+). The protein operates within cofactor biosynthesis; riboflavin biosynthesis; riboflavin from 2-hydroxy-3-oxobutyl phosphate and 5-amino-6-(D-ribitylamino)uracil: step 1/2. Functionally, catalyzes the formation of 6,7-dimethyl-8-ribityllumazine by condensation of 5-amino-6-(D-ribitylamino)uracil with 3,4-dihydroxy-2-butanone 4-phosphate. This is the penultimate step in the biosynthesis of riboflavin. In Shewanella loihica (strain ATCC BAA-1088 / PV-4), this protein is 6,7-dimethyl-8-ribityllumazine synthase.